A 32-amino-acid chain; its full sequence is Protamine S4 (32 aa).

Residues 1–32 form a disordered region; that stretch reads GCKKRKARKRPKCKKARKRPKCKRRKVAKKKC.

As to expression, testis.

The protein resides in the nucleus. The protein localises to the chromosome. Protamines substitute for histones in the chromatin of sperm during the haploid phase of spermatogenesis. They compact sperm DNA into a highly condensed, stable and inactive complex. This is Protamine S4 from Scyliorhinus canicula (Small-spotted catshark).